The sequence spans 552 residues: Cholesterol oxidase (552 aa).

Residues 1-45 (MTDSRANRADATRGVASVSRRRFLAGAGLTAGAIALSSMSTSASA) constitute a signal peptide (tat-type signal). Tyr66, Gly67, Glu86, Gly160, Asn164, Gly165, Met167, and Val295 together coordinate FAD. Residues Glu406 and His492 each act as proton acceptor in the active site. Residues Gly520 and Phe532 each coordinate FAD.

This sequence belongs to the GMC oxidoreductase family. The cofactor is FAD. Post-translationally, predicted to be exported by the Tat system. The position of the signal peptide cleavage has been experimentally proven.

The protein localises to the secreted. It catalyses the reaction cholesterol + O2 = cholest-5-en-3-one + H2O2. The catalysed reaction is cholest-5-en-3-one = cholest-4-en-3-one. Its pathway is steroid metabolism; cholesterol degradation. In terms of biological role, bifunctional enzyme that catalyzes the oxidation and isomerization of cholesterol to cholestenone (cholest-4-en-3-one), an initial step in the cholesterol degradation process. The chain is Cholesterol oxidase from Brevibacterium sterolicum.